The following is an 85-amino-acid chain: Small ribosomal subunit protein bS16c (85 aa).

The protein belongs to the bacterial ribosomal protein bS16 family.

The protein resides in the plastid. It localises to the chloroplast. The protein is Small ribosomal subunit protein bS16c of Nicotiana tabacum (Common tobacco).